The chain runs to 356 residues: Protein-glutamate methylesterase/protein-glutamine glutaminase 3 (356 aa).

Residues 3 to 120 (KVAIVDDSAV…KGFLEESQAR (118 aa)) form the Response regulatory domain. Asp-54 is subject to 4-aspartylphosphate. Residues 165 to 356 (NQTTDRVVAL…AEEIIAFTKQ (192 aa)) enclose the CheB-type methylesterase domain. Residues Ser-177, His-203, and Asp-299 contribute to the active site.

It belongs to the CheB family. Phosphorylated by CheA. Phosphorylation of the N-terminal regulatory domain activates the methylesterase activity.

The protein localises to the cytoplasm. The catalysed reaction is [protein]-L-glutamate 5-O-methyl ester + H2O = L-glutamyl-[protein] + methanol + H(+). It catalyses the reaction L-glutaminyl-[protein] + H2O = L-glutamyl-[protein] + NH4(+). Its function is as follows. Involved in chemotaxis. Part of a chemotaxis signal transduction system that modulates chemotaxis in response to various stimuli. Catalyzes the demethylation of specific methylglutamate residues introduced into the chemoreceptors (methyl-accepting chemotaxis proteins or MCP) by CheR. Also mediates the irreversible deamidation of specific glutamine residues to glutamic acid. The chain is Protein-glutamate methylesterase/protein-glutamine glutaminase 3 from Shewanella oneidensis (strain ATCC 700550 / JCM 31522 / CIP 106686 / LMG 19005 / NCIMB 14063 / MR-1).